An 89-amino-acid polypeptide reads, in one-letter code: MEKYEKAAEIFKAFGDPTRLMILKLLAENGSMCVCKIIDELKKPQPTISHHLNILKKAGIVKARKEGTWNFYYIVDDRVKEIIKLVDEL.

One can recognise an HTH arsR-type domain in the interval 1–89; sequence MEKYEKAAEI…KEIIKLVDEL (89 aa).

This is an uncharacterized protein from Methanocaldococcus jannaschii (strain ATCC 43067 / DSM 2661 / JAL-1 / JCM 10045 / NBRC 100440) (Methanococcus jannaschii).